Consider the following 119-residue polypeptide: Acidic phospholipase A2 CM-II (119 aa).

7 disulfide bridges follow: cysteine 11-cysteine 71, cysteine 26-cysteine 118, cysteine 28-cysteine 44, cysteine 43-cysteine 99, cysteine 50-cysteine 92, cysteine 60-cysteine 85, and cysteine 78-cysteine 90. Ca(2+) is bound by residues phenylalanine 27, glycine 29, and glycine 31. Histidine 47 is a catalytic residue. A Ca(2+)-binding site is contributed by aspartate 48. Residue aspartate 93 is part of the active site.

It belongs to the phospholipase A2 family. Group I subfamily. D49 sub-subfamily. Ca(2+) serves as cofactor. Expressed by the venom gland.

The protein resides in the secreted. It carries out the reaction a 1,2-diacyl-sn-glycero-3-phosphocholine + H2O = a 1-acyl-sn-glycero-3-phosphocholine + a fatty acid + H(+). Its function is as follows. PLA2 catalyzes the calcium-dependent hydrolysis of the 2-acyl groups in 3-sn-phosphoglycerides. The polypeptide is Acidic phospholipase A2 CM-II (Aspidelaps scutatus (Shield-nose snake)).